A 354-amino-acid polypeptide reads, in one-letter code: G-protein coupled receptor homolog US28 (354 aa).

The Extracellular portion of the chain corresponds to 1 to 37 (MTPTTTTAELTTEFDYDEDATPCVFTDVLNQSKPVTL). The N-linked (GlcNAc...) asparagine; by host glycan is linked to N30. Residues 38–58 (FLYGVVFLFGSIGNFLVIFTI) form a helical membrane-spanning segment. Over 59-69 (TWRRRIQCSGD) the chain is Cytoplasmic. The chain crosses the membrane as a helical span at residues 70–90 (VYFINLAAADLLFVCTLPLWM). Over 91 to 101 (QYLLDHNSLAS) the chain is Extracellular. A helical membrane pass occupies residues 102 to 122 (VPCTLLTACFYVAMFASLCFI). Residues 123–145 (TEIALDRYYAIVYMRYRPVKQAC) are Cytoplasmic-facing. A helical membrane pass occupies residues 146-166 (LFSIFWWIFAVIIAIPHFMVV). Residues 167 to 183 (TKKDNQCMTDYDYLEVS) lie on the Extracellular side of the membrane. A helical membrane pass occupies residues 184 to 204 (YPIILNVELMLGAFVIPLSVI). Residues 205–228 (SYCYYRISRIVAVSQSRHKGRIVR) lie on the Cytoplasmic side of the membrane. Residues 229–249 (VLIAVVLVFIIFWLPYHLTLF) traverse the membrane as a helical segment. At 250-273 (VDTLKLLKWISSSCEFERSLKRAL) the chain is on the extracellular side. Residues 274 to 294 (ILTESLAFCHCCLNPLLYVFV) form a helical membrane-spanning segment. The Cytoplasmic portion of the chain corresponds to 295-354 (GTKFRQELHCLLAEFRQRLFSRDVSWYHSMSFSRRSSPSRRETSSDTLSDEVCRVSQIIP).

The protein belongs to the G-protein coupled receptor 1 family. As to quaternary structure, interacts with host GPRASP1; this interaction targets US28 to lysosomes for degradation. Interacts with host CX3CL1/Fractalkine (via N-terminus). Interacts with host Gi alpha-1 subunit GNAI1; this interaction does not lead to the catalytic activation of Gi complex. Phosphorylated. High phosphorylation occurs concomitantly with receptor endocytosis and correlate with low receptor presence at the plasma membrane.

It localises to the host cell membrane. Its function is as follows. Binds to a great number of different CC-chemokines including CCL5/RANTES, CCL2/MCP-1, CCL3/MIP-1-alpha as well as CX3CL1/Fractalkine. Transduces signals resulting in the activation of MAP kinase signaling pathways and augmentation of intracellular calcium ion levels, leading to alterations in chemotactic behavior of vascular smooth muscle cells and macrophages. The US28 receptor also exhibits high levels of agonist-independent signaling activity and agonist-independent endocytosis. Interacts with the host Gi complex without activating it, thereby probably interfering with the chemokine-Gi signaling. May also function as a G protein sink to sequester G protein from the cell surface via internalization. Interacts with endogenous Gaq/11 subunits and thereby constitutively activates phospholipase C. This Homo sapiens (Human) protein is G-protein coupled receptor homolog US28 (US28).